Reading from the N-terminus, the 594-residue chain is Keratin, type II cytoskeletal 2 oral (594 aa).

The head stretch occupies residues 1-164; that stretch reads MSRQACKKSF…DPQIGQVKAQ (164 aa). An omega-N-methylarginine mark is found at Arg85 and Arg104. The interval 165–200 is coil 1A; the sequence is EREQIKTLNNKFASFIDKVRFLEQQNKVLETKWELL. One can recognise an IF rod domain in the interval 165-480; sequence EREQIKTLNN…KLLEGEECRL (316 aa). Positions 201-221 are linker 1; it reads QQQTIRSGSGPQNLEPFFESY. The interval 222-313 is coil 1B; the sequence is ISCLRKQLDS…TLYDMELSQI (92 aa). The segment at 314 to 337 is linker 12; sequence QSHVSDTSVVLSMDNNRCLDLDSI. Residues 338–476 form a coil 2 region; that stretch reads IAEVKAQYED…ATYRKLLEGE (139 aa). The segment at 477 to 594 is tail; that stretch reads ECRLSGEFQN…TTSSSQQRSK (118 aa). The interval 497-594 is disordered; it reads TSTSSSGSFR…TTSSSQQRSK (98 aa). Gly residues predominate over residues 506-522; the sequence is RGTGGSNYGGDSSGRSG. Low complexity predominate over residues 523–551; sequence GSSSSSSRGSSSRGSSGSRLGSGGSISVS. Residue Arg541 is modified to Omega-N-methylarginine. A compositionally biased stretch (polar residues) spans 552–564; the sequence is QQRMGFNSGGSQT. A compositionally biased stretch (low complexity) spans 565–594; that stretch reads SVGSSYKSGRGGSSSVQFSQTTSSSQQRSK.

This sequence belongs to the intermediate filament family. In terms of assembly, heterotetramer of two type I and two type II keratins.

In terms of biological role, probably contributes to terminal cornification. This chain is Keratin, type II cytoskeletal 2 oral, found in Mus musculus (Mouse).